Reading from the N-terminus, the 157-residue chain is Glycine-rich RNA-binding, abscisic acid-inducible protein (157 aa).

The region spanning Tyr8–Ser86 is the RRM domain. The segment at Asn82 to Asp157 is disordered. Residues Arg87–Asp157 show a composition bias toward gly residues.

Possibly has a role in RNA transcription or processing during stress. The sequence is that of Glycine-rich RNA-binding, abscisic acid-inducible protein (RAB15) from Zea mays (Maize).